The chain runs to 185 residues: Crossover junction endodeoxyribonuclease RuvC (185 aa).

Residues Asp-7, Glu-66, and Asp-137 contribute to the active site. Positions 7, 66, and 137 each coordinate Mg(2+).

Belongs to the RuvC family. As to quaternary structure, homodimer which binds Holliday junction (HJ) DNA. The HJ becomes 2-fold symmetrical on binding to RuvC with unstacked arms; it has a different conformation from HJ DNA in complex with RuvA. In the full resolvosome a probable DNA-RuvA(4)-RuvB(12)-RuvC(2) complex forms which resolves the HJ. Mg(2+) is required as a cofactor.

It is found in the cytoplasm. It catalyses the reaction Endonucleolytic cleavage at a junction such as a reciprocal single-stranded crossover between two homologous DNA duplexes (Holliday junction).. Its function is as follows. The RuvA-RuvB-RuvC complex processes Holliday junction (HJ) DNA during genetic recombination and DNA repair. Endonuclease that resolves HJ intermediates. Cleaves cruciform DNA by making single-stranded nicks across the HJ at symmetrical positions within the homologous arms, yielding a 5'-phosphate and a 3'-hydroxyl group; requires a central core of homology in the junction. The consensus cleavage sequence is 5'-(A/T)TT(C/G)-3'. Cleavage occurs on the 3'-side of the TT dinucleotide at the point of strand exchange. HJ branch migration catalyzed by RuvA-RuvB allows RuvC to scan DNA until it finds its consensus sequence, where it cleaves and resolves the cruciform DNA. This is Crossover junction endodeoxyribonuclease RuvC from Anaeromyxobacter dehalogenans (strain 2CP-1 / ATCC BAA-258).